The following is a 314-amino-acid chain: Deoxyhypusine hydroxylase (314 aa).

N-acetylmethionine is present on M1. HEAT-like PBS-type repeat units lie at residues 61-87, 94-120, 188-214, 219-245, and 252-278; these read LAHE…VLND, VRHE…SLSS, ERYA…SLSA, LRHE…VLRD, and VRHE…FSKD. H63, E64, H96, and E97 together coordinate Fe cation. H221, E222, H254, and E255 together coordinate Fe cation.

Belongs to the deoxyhypusine hydroxylase family. Requires Fe(2+) as cofactor.

The catalysed reaction is [eIF5A protein]-deoxyhypusine + AH2 + O2 = [eIF5A protein]-hypusine + A + H2O. It participates in protein modification; eIF5A hypusination. Functionally, catalyzes the hydroxylation of the N(6)-(4-aminobutyl)-L-lysine intermediate to form hypusine, an essential post-translational modification only found in mature eIF-5A factor. The polypeptide is Deoxyhypusine hydroxylase (Arabidopsis thaliana (Mouse-ear cress)).